Reading from the N-terminus, the 670-residue chain is uncharacterized protein (670 aa).

10 consecutive transmembrane segments (helical) span residues 23-42, 47-69, 76-98, 118-140, 153-170, 381-403, 410-432, 437-454, 461-483, and 493-510; these read YALR…YYLN, YWAM…SKSL, LLGA…FFLL, VAYA…VNIT, VCEV…MMIL, QWDA…SAVA, SLLM…GLMV, LWQF…MQLL, FAAL…NPPV, and NLAK…FAIL.

Belongs to the aromatic acid exporter ArAE (TC 2.A.85) family.

It localises to the cell membrane. This is an uncharacterized protein from Escherichia coli (strain K12).